We begin with the raw amino-acid sequence, 482 residues long: Methylenetetrahydrofolate--tRNA-(uracil-5-)-methyltransferase TrmFO (482 aa).

11–16 (GAGLAG) serves as a coordination point for FAD.

The protein belongs to the MnmG family. TrmFO subfamily. FAD serves as cofactor.

The protein localises to the cytoplasm. The catalysed reaction is uridine(54) in tRNA + (6R)-5,10-methylene-5,6,7,8-tetrahydrofolate + NADH + H(+) = 5-methyluridine(54) in tRNA + (6S)-5,6,7,8-tetrahydrofolate + NAD(+). It carries out the reaction uridine(54) in tRNA + (6R)-5,10-methylene-5,6,7,8-tetrahydrofolate + NADPH + H(+) = 5-methyluridine(54) in tRNA + (6S)-5,6,7,8-tetrahydrofolate + NADP(+). Functionally, catalyzes the folate-dependent formation of 5-methyl-uridine at position 54 (M-5-U54) in all tRNAs. This chain is Methylenetetrahydrofolate--tRNA-(uracil-5-)-methyltransferase TrmFO, found in Nitratidesulfovibrio vulgaris (strain DP4) (Desulfovibrio vulgaris).